Consider the following 428-residue polypeptide: 3-phosphoshikimate 1-carboxyvinyltransferase (428 aa).

3-phosphoshikimate is bound by residues Lys-19, Ser-20, and Arg-24. Residue Lys-19 coordinates phosphoenolpyruvate. The phosphoenolpyruvate site is built by Gly-91 and Arg-119. Positions 164, 166, 312, and 339 each coordinate 3-phosphoshikimate. A phosphoenolpyruvate-binding site is contributed by Gln-166. The active-site Proton acceptor is Asp-312. Arg-343 and Arg-386 together coordinate phosphoenolpyruvate.

Belongs to the EPSP synthase family. In terms of assembly, monomer.

The protein resides in the cytoplasm. It carries out the reaction 3-phosphoshikimate + phosphoenolpyruvate = 5-O-(1-carboxyvinyl)-3-phosphoshikimate + phosphate. Its pathway is metabolic intermediate biosynthesis; chorismate biosynthesis; chorismate from D-erythrose 4-phosphate and phosphoenolpyruvate: step 6/7. Its function is as follows. Catalyzes the transfer of the enolpyruvyl moiety of phosphoenolpyruvate (PEP) to the 5-hydroxyl of shikimate-3-phosphate (S3P) to produce enolpyruvyl shikimate-3-phosphate and inorganic phosphate. The polypeptide is 3-phosphoshikimate 1-carboxyvinyltransferase (Bacillus pumilus (strain SAFR-032)).